Consider the following 240-residue polypeptide: Regulatory protein RecX (240 aa).

Belongs to the RecX family.

The protein resides in the cytoplasm. Modulates RecA activity. This Lacticaseibacillus paracasei (strain ATCC 334 / BCRC 17002 / CCUG 31169 / CIP 107868 / KCTC 3260 / NRRL B-441) (Lactobacillus paracasei) protein is Regulatory protein RecX.